The following is an 82-amino-acid chain: Small ribosomal subunit protein uS17 (82 aa).

This sequence belongs to the universal ribosomal protein uS17 family. As to quaternary structure, part of the 30S ribosomal subunit.

One of the primary rRNA binding proteins, it binds specifically to the 5'-end of 16S ribosomal RNA. In Rhodopseudomonas palustris (strain BisA53), this protein is Small ribosomal subunit protein uS17.